The sequence spans 189 residues: NADH-quinone oxidoreductase subunit B (189 aa).

4 residues coordinate [4Fe-4S] cluster: cysteine 39, cysteine 40, cysteine 104, and cysteine 135.

This sequence belongs to the complex I 20 kDa subunit family. In terms of assembly, NDH-1 is composed of 14 different subunits. Subunits NuoB, C, D, E, F, and G constitute the peripheral sector of the complex. [4Fe-4S] cluster is required as a cofactor.

The protein resides in the cell inner membrane. The catalysed reaction is a quinone + NADH + 5 H(+)(in) = a quinol + NAD(+) + 4 H(+)(out). Its function is as follows. NDH-1 shuttles electrons from NADH, via FMN and iron-sulfur (Fe-S) centers, to quinones in the respiratory chain. The immediate electron acceptor for the enzyme in this species is believed to be a menaquinone. Couples the redox reaction to proton translocation (for every two electrons transferred, four hydrogen ions are translocated across the cytoplasmic membrane), and thus conserves the redox energy in a proton gradient. This chain is NADH-quinone oxidoreductase subunit B, found in Chlorobium phaeobacteroides (strain DSM 266 / SMG 266 / 2430).